Reading from the N-terminus, the 469-residue chain is Properdin (469 aa).

Residues 1 to 27 (MITEGAQAPRLLLPPLLLLLTLPATGS) form the signal peptide. 7 consecutive TSP type-1 domains span residues 28-76 (DPVL…QPCR), 77-134 (SPRW…QCCP), 136-191 (MGGW…QVCP), 193-255 (HGAW…PPCP), 257-313 (AGGW…VPCP), 315-377 (DGEW…QHCP), and 379-462 (KGSW…PACK). 3 disulfide bridges follow: Cys-32–Cys-56, Cys-43–Cys-72, and Cys-57–Cys-75. 2 C-linked (Man) tryptophan glycosylation sites follow: Trp-83 and Trp-86. Intrachain disulfides connect Cys-89–Cys-127, Cys-93–Cys-133, Cys-104–Cys-111, Cys-132–Cys-170, Cys-148–Cys-184, Cys-152–Cys-190, and Cys-163–Cys-174. Residue Thr-92 is glycosylated (O-linked (Fuc...) threonine). 3 C-linked (Man) tryptophan glycosylation sites follow: Trp-139, Trp-142, and Trp-145. Thr-151 is a glycosylation site (O-linked (Fuc...) threonine). Residues Trp-196, Trp-199, and Trp-202 are each glycosylated (C-linked (Man) tryptophan). 3 disulfides stabilise this stretch: Cys-205/Cys-248, Cys-209/Cys-254, and Cys-224/Cys-238. Ser-208 carries O-linked (Fuc...) serine glycosylation. Positions 219–238 (TRSRKCSAPEPSQKPPGKPC) are disordered. Residues Trp-260 and Trp-263 are each glycosylated (C-linked (Man) tryptophan). Intrachain disulfides connect Cys-269–Cys-306, Cys-273–Cys-312, and Cys-284–Cys-296. Thr-272 is a glycosylation site (O-linked (Fuc...) threonine). C-linked (Man) tryptophan glycosylation is found at Trp-321 and Trp-324. 3 disulfide bridges follow: Cys-327-Cys-370, Cys-337-Cys-376, and Cys-350-Cys-360. Residues 351–359 (RGRKFDGHR) form an interaction with Complement C3 beta chain region. C-linked (Man) tryptophan glycans are attached at residues Trp-382, Trp-385, and Trp-388. 3 disulfide bridges follow: Cys-391–Cys-455, Cys-395–Cys-461, and Cys-407–Cys-439. The N-linked (GlcNAc...) (complex) asparagine glycan is linked to Asn-428.

In plasma, properdin exists as dimers, trimers or tetramers in the relative proportions of 26:54:20. Interacts with the pro-C3-convertase enzyme complex (C3b-Bb) comprised of Complement C3 beta chain (C3b) and the Complement factor B Bb fragment (Bb), where it binds (via its TSP type-1 5 domain) with C3b and Bb. This interaction stabilizes the complex and allows it to become the active C3-convertase enzyme complex (C3b-Bb-FP). Interacts with C3b. Interacts with CFB.

The protein resides in the secreted. Functionally, a positive regulator of the alternate pathway (AP) of complement. It binds to and stabilizes the C3- and C5-convertase enzyme complexes. Inhibits CFI-CFH mediated degradation of Complement C3 beta chain (C3b). The polypeptide is Properdin (Homo sapiens (Human)).